Consider the following 416-residue polypeptide: Diaminobutyrate--2-oxoglutarate transaminase (416 aa).

At Lys-263 the chain carries N6-(pyridoxal phosphate)lysine.

Belongs to the class-III pyridoxal-phosphate-dependent aminotransferase family. Pyridoxal 5'-phosphate serves as cofactor.

It carries out the reaction L-2,4-diaminobutanoate + 2-oxoglutarate = L-aspartate 4-semialdehyde + L-glutamate. It functions in the pathway amine and polyamine biosynthesis; ectoine biosynthesis; L-ectoine from L-aspartate 4-semialdehyde: step 1/3. Its function is as follows. Catalyzes reversively the conversion of L-aspartate beta-semialdehyde (ASA) to L-2,4-diaminobutyrate (DABA) by transamination with L-glutamate. The polypeptide is Diaminobutyrate--2-oxoglutarate transaminase (ectB) (Virgibacillus pantothenticus).